A 250-amino-acid chain; its full sequence is tRNA (guanine-N(1)-)-methyltransferase (250 aa).

Residues glycine 112 and 132–137 each bind S-adenosyl-L-methionine; that span reads IGDFVL.

It belongs to the RNA methyltransferase TrmD family. In terms of assembly, homodimer.

The protein resides in the cytoplasm. The catalysed reaction is guanosine(37) in tRNA + S-adenosyl-L-methionine = N(1)-methylguanosine(37) in tRNA + S-adenosyl-L-homocysteine + H(+). Its function is as follows. Specifically methylates guanosine-37 in various tRNAs. The chain is tRNA (guanine-N(1)-)-methyltransferase from Marinomonas sp. (strain MWYL1).